Consider the following 348-residue polypeptide: Structural glycoprotein p40 (348 aa).

This sequence belongs to the baculoviridae gp41 family. Post-translationally, O-glycosylated; contains N-acetylglucosamine side chains.

This Bombyx mori nuclear polyhedrosis virus (BmNPV) protein is Structural glycoprotein p40 (P40).